Here is a 314-residue protein sequence, read N- to C-terminus: ATP synthase gamma chain (314 aa).

The protein belongs to the ATPase gamma chain family. As to quaternary structure, F-type ATPases have 2 components, CF(1) - the catalytic core - and CF(0) - the membrane proton channel. CF(1) has five subunits: alpha(3), beta(3), gamma(1), delta(1), epsilon(1). CF(0) has three main subunits: a, b and c.

It localises to the cellular thylakoid membrane. Functionally, produces ATP from ADP in the presence of a proton gradient across the membrane. The gamma chain is believed to be important in regulating ATPase activity and the flow of protons through the CF(0) complex. This Rippkaea orientalis (strain PCC 8801 / RF-1) (Cyanothece sp. (strain PCC 8801)) protein is ATP synthase gamma chain.